Here is a 64-residue protein sequence, read N- to C-terminus: uncharacterized protein (64 aa).

Residues Phe30–Glu52 form a helical membrane-spanning segment.

It localises to the membrane. This is an uncharacterized protein from Archaeoglobus fulgidus (strain ATCC 49558 / DSM 4304 / JCM 9628 / NBRC 100126 / VC-16).